Reading from the N-terminus, the 2033-residue chain is Envoplakin (2033 aa).

Residues methionine 1–serine 27 are compositionally biased toward low complexity. Disordered regions lie at residues methionine 1 to glutamine 37 and glutamine 65 to arginine 85. Residues methionine 1–proline 841 form a globular 1 region. The tract at residues lysine 12–proline 28 is 4 X 4 AA tandem repeats of K-G-S-P. Residues serine 71–glycine 84 are compositionally biased toward polar residues. The stretch at tyrosine 229–glutamine 330 is one Spectrin repeat. A compositionally biased stretch (basic and acidic residues) spans threonine 388 to aspartate 401. Disordered regions lie at residues threonine 388–valine 418 and serine 891–alanine 916. One can recognise an SH3 domain in the interval glutamine 413 to proline 470. Positions lysine 842–glutamine 1673 are central fibrous rod domain. Residues arginine 845–isoleucine 1135 adopt a coiled-coil conformation. Residues serine 891–glutamine 902 are compositionally biased toward basic and acidic residues. The stretch at lysine 1185–glycine 1226 is one Plectin 1 repeat. Serine 1575 carries the post-translational modification Phosphoserine. The span at glutamine 1614 to lysine 1623 shows a compositional bias: low complexity. Residues glutamine 1614–glutamine 1636 form a disordered region. The segment at glutamate 1674–arginine 2033 is globular 2. The Plectin 2 repeat unit spans residues arginine 1678–tyrosine 1713. Position 1799 is a phosphoserine (serine 1799). Plectin repeat units follow at residues leucine 1818–glycine 1855, glutamine 1856–threonine 1893, glutamine 1894–valine 1931, leucine 1932–alanine 1969, and glutamine 1970–glycine 2007. Serine 2025 carries the phosphoserine modification.

This sequence belongs to the plakin or cytolinker family. May form a homodimer or a heterodimer with PPL. In terms of tissue distribution, exclusively expressed in stratified squamous epithelia.

Its subcellular location is the cell junction. The protein resides in the desmosome. The protein localises to the cornified envelope. It is found in the cytoplasm. It localises to the cytoskeleton. Its function is as follows. Component of the cornified envelope of keratinocytes. May link the cornified envelope to desmosomes and intermediate filaments. This Homo sapiens (Human) protein is Envoplakin (EVPL).